Consider the following 739-residue polypeptide: Polyribonucleotide nucleotidyltransferase (739 aa).

Mg(2+) contacts are provided by D488 and D494. Residues 555-614 (PKIVTLKINPDKIRDVIGPGGKVINGIIDETGVKIDIDQDGTVFIASTDQDGINHARQLI) enclose the KH domain. One can recognise an S1 motif domain in the interval 624-692 (GEEFDGTVRR…DKGRVNASHK (69 aa)). The interval 698 to 739 (GMSPEDRAAYDEKKKTERDSRPPRRDTGSRPPRDGQRPPRRN) is disordered. The span at 701-739 (PEDRAAYDEKKKTERDSRPPRRDTGSRPPRDGQRPPRRN) shows a compositional bias: basic and acidic residues.

The protein belongs to the polyribonucleotide nucleotidyltransferase family. Mg(2+) is required as a cofactor.

Its subcellular location is the cytoplasm. It carries out the reaction RNA(n+1) + phosphate = RNA(n) + a ribonucleoside 5'-diphosphate. In terms of biological role, involved in mRNA degradation. Catalyzes the phosphorolysis of single-stranded polyribonucleotides processively in the 3'- to 5'-direction. This is Polyribonucleotide nucleotidyltransferase from Exiguobacterium sibiricum (strain DSM 17290 / CCUG 55495 / CIP 109462 / JCM 13490 / 255-15).